A 213-amino-acid chain; its full sequence is Pyrrolidone-carboxylate peptidase (213 aa).

Catalysis depends on residues E78, C141, and H165.

Belongs to the peptidase C15 family. In terms of assembly, homotetramer.

The protein localises to the cytoplasm. It carries out the reaction Release of an N-terminal pyroglutamyl group from a polypeptide, the second amino acid generally not being Pro.. In terms of biological role, removes 5-oxoproline from various penultimate amino acid residues except L-proline. This is Pyrrolidone-carboxylate peptidase from Clostridium perfringens (strain 13 / Type A).